The chain runs to 1017 residues: Multiple C2 domain and transmembrane region protein 14 (1017 aa).

One can recognise a C2 1 domain in the interval 1–110; sequence MADNVLRKLI…ASAGSETLVY (110 aa). The disordered stretch occupies residues 139–231; sequence AAPAATEPKP…PAEVKNPPIP (93 aa). The span at 141 to 153 shows a compositional bias: low complexity; sequence PAATEPKPEAAAA. The segment covering 154–213 has biased composition (basic and acidic residues); sequence TEEKPPEIAKAEDGKKETEAAKTEEKKEGDKKEEEKPKEEAKPDEKKPDAPPDTKAKKPD. The segment covering 217–231 has biased composition (pro residues); that stretch reads APPPPPAEVKNPPIP. C2 domains follow at residues 258–387, 420–554, and 587–714; these read DLEL…PQWY, DSGG…SRWF, and VTSD…LNSY. Ca(2+)-binding residues include Asp-296, Asn-299, Asp-352, Thr-355, and Glu-359. A run of 2 helical transmembrane segments spans residues 851-871 and 957-977; these read VAIVLCPHLVLPTVFMYAFLI and ATCIFVVFCLFASFLFYIVPF.

It belongs to the MCTP family. Ca(2+) serves as cofactor. Expressed in incipient leaf primordia and in roots meristems. Observed in flowers.

The protein localises to the membrane. Its subcellular location is the vesicle. It is found in the golgi apparatus membrane. Its function is as follows. May function as a signaling molecule by regulating the trafficking of other regulators. This is Multiple C2 domain and transmembrane region protein 14 from Arabidopsis thaliana (Mouse-ear cress).